The sequence spans 243 residues: MTYHLRVADLPSSDRPREKLLAQGARYLTSAELIAILLGTGQGAGKLSAIGLGQYILQQLGQHQRDPLAVLREITPQELMAIPGIGPAKATTILAAIELGKRVFQSKPTEQTIINDPAVAAAALGSELFWQAQEKFAVLLLDVRHRLIGTQVITIGTATETIAHPRDIFREVIRQGATRVIVAHNHPSGNVEPSPEDLALTQQLLSGAKFLDIPLLDHLILGNGNFRSLRQTTKLWEECPQGD.

Residues 112–235 enclose the MPN domain; sequence TIINDPAVAA…FRSLRQTTKL (124 aa). Residues histidine 184, histidine 186, and aspartate 197 each contribute to the Zn(2+) site. The JAMM motif motif lies at 184 to 197; it reads HNHPSGNVEPSPED.

Belongs to the UPF0758 family.

The sequence is that of UPF0758 protein Cyan7425_1778 from Cyanothece sp. (strain PCC 7425 / ATCC 29141).